We begin with the raw amino-acid sequence, 142 residues long: Large ribosomal subunit protein uL13 (142 aa).

It belongs to the universal ribosomal protein uL13 family. As to quaternary structure, part of the 50S ribosomal subunit.

In terms of biological role, this protein is one of the early assembly proteins of the 50S ribosomal subunit, although it is not seen to bind rRNA by itself. It is important during the early stages of 50S assembly. The polypeptide is Large ribosomal subunit protein uL13 (Histophilus somni (strain 2336) (Haemophilus somnus)).